Reading from the N-terminus, the 382-residue chain is UBP1-associated proteins 1B (382 aa).

Residues 1-99 (MAKEGEERKK…SDESEEIVDS (99 aa)) are disordered. Positions 10–22 (KEKKEKKERKERK) are enriched in basic residues. Over residues 23–34 (RREAEELAVREK) the composition is skewed to basic and acidic residues. The 86-residue stretch at 163 to 248 (RNIFVRGLGW…RPFNSGKPRE (86 aa)) folds into the RRM domain.

It localises to the nucleus. Acts as a component of a complex regulating the turnover of mRNAs in the nucleus. Binds with high affinity to RNA molecules that contain U-rich sequences in 3'-UTRs. May function in complex with UBP1 and contribute to the stabilization of mRNAs in the nucleus. This Arabidopsis thaliana (Mouse-ear cress) protein is UBP1-associated proteins 1B (UBA1B).